A 598-amino-acid polypeptide reads, in one-letter code: NADH-quinone oxidoreductase subunit C/D (598 aa).

The segment at 1–189 (MTDSTTHDRE…DPFELTRQKQ (189 aa)) is NADH dehydrogenase I subunit C. An NADH dehydrogenase I subunit D region spans residues 213–598 (DFMFLNLGPN…IDFVMSDVDR (386 aa)).

This sequence in the N-terminal section; belongs to the complex I 30 kDa subunit family. It in the C-terminal section; belongs to the complex I 49 kDa subunit family. NDH-1 is composed of 13 different subunits. Subunits NuoB, CD, E, F, and G constitute the peripheral sector of the complex.

It is found in the cell inner membrane. It carries out the reaction a quinone + NADH + 5 H(+)(in) = a quinol + NAD(+) + 4 H(+)(out). Functionally, NDH-1 shuttles electrons from NADH, via FMN and iron-sulfur (Fe-S) centers, to quinones in the respiratory chain. The immediate electron acceptor for the enzyme in this species is believed to be ubiquinone. Couples the redox reaction to proton translocation (for every two electrons transferred, four hydrogen ions are translocated across the cytoplasmic membrane), and thus conserves the redox energy in a proton gradient. The chain is NADH-quinone oxidoreductase subunit C/D from Edwardsiella ictaluri (strain 93-146).